A 227-amino-acid polypeptide reads, in one-letter code: Large ribosomal subunit protein uL3 (227 aa).

Gln158 bears the N5-methylglutamine mark.

This sequence belongs to the universal ribosomal protein uL3 family. In terms of assembly, part of the 50S ribosomal subunit. Forms a cluster with proteins L14 and L19. In terms of processing, methylated by PrmB.

Functionally, one of the primary rRNA binding proteins, it binds directly near the 3'-end of the 23S rRNA, where it nucleates assembly of the 50S subunit. The polypeptide is Large ribosomal subunit protein uL3 (Polaromonas sp. (strain JS666 / ATCC BAA-500)).